A 244-amino-acid chain; its full sequence is Probable 2-phosphosulfolactate phosphatase (244 aa).

It belongs to the ComB family. Mg(2+) serves as cofactor.

The enzyme catalyses (2R)-O-phospho-3-sulfolactate + H2O = (2R)-3-sulfolactate + phosphate. The polypeptide is Probable 2-phosphosulfolactate phosphatase (Thermosynechococcus vestitus (strain NIES-2133 / IAM M-273 / BP-1)).